The following is a 329-amino-acid chain: uncharacterized protein (329 aa).

An N-terminal signal peptide occupies residues Met1–Ala22.

This is an uncharacterized protein from Arabidopsis thaliana (Mouse-ear cress).